The primary structure comprises 294 residues: Nucleotide-binding protein Daud_0300 (294 aa).

Position 11-18 (11-18 (GLSGAGKT)) interacts with ATP. A GTP-binding site is contributed by 62 to 65 (DIRG).

Belongs to the RapZ-like family.

Displays ATPase and GTPase activities. The sequence is that of Nucleotide-binding protein Daud_0300 from Desulforudis audaxviator (strain MP104C).